The primary structure comprises 444 residues: Sprouty-related, EVH1 domain-containing protein 1 (444 aa).

Ser-2 carries the post-translational modification N-acetylserine. The WH1 domain occupies 6–123 (ATSDNDNSYA…RGIRRAIEDI (118 aa)). Positions 123–151 (ISQGCPESKNEAEGADDLQANEEDSSSSL) are disordered. Acidic residues predominate over residues 135-147 (EGADDLQANEEDS). An N6-methyllysine modification is found at Lys-224. The 53-residue stretch at 233 to 285 (SIRHVSFQDEDEIVRINPRDILIRRYADYRHPDMWKNDLERDDADSSIQFSKP) folds into the KBD domain. Ser-238 and Ser-308 each carry phosphoserine. Residues 333–444 (SRCVYCQERF…CCGGKHKAAG (112 aa)) are required for interaction with TESK1. Residues 334-442 (RCVYCQERFN…CGCCGGKHKA (109 aa)) enclose the SPR domain.

As to quaternary structure, homodimer and heterodimer. Able to interact with SPRED2 to form heterodimers. Interacts (via C-terminus) with TAOK1/MARKK (via C-terminus); the interaction does not affect TAOK1 kinase activity. Interacts (via C-terminus) with TESK1 (via C-terminus); the interaction inhibits TESK1 kinase activity. Interacts with CAV1. Interacts with RAS. Interacts with palmitoyltransferase ZDHHC17/HIP14; the interaction leads to palmitoylation of SPRED1. In terms of processing, palmitoylated by ZDHHC17/HIP14. Phosphorylated on tyrosine. Post-translationally, ubiquitinated. Weakly expressed in embryonic cell line HEK293.

It localises to the cell membrane. The protein resides in the membrane. The protein localises to the caveola. Its subcellular location is the nucleus. In terms of biological role, tyrosine kinase substrate that inhibits growth-factor-mediated activation of MAP kinase. Negatively regulates hematopoiesis of bone marrow. Inhibits fibroblast growth factor (FGF)-induced retinal lens fiber differentiation, probably by inhibiting FGF-mediated phosphorylation of ERK1/2. Attenuates actin stress fiber formation via inhibition of TESK1-mediated phosphorylation of cofilin. Inhibits TGFB-induced epithelial-to-mesenchymal transition in lens epithelial cells. The chain is Sprouty-related, EVH1 domain-containing protein 1 (SPRED1) from Homo sapiens (Human).